The following is a 518-amino-acid chain: Uronate isomerase (518 aa).

It belongs to the metallo-dependent hydrolases superfamily. Uronate isomerase family.

The enzyme catalyses D-glucuronate = D-fructuronate. The catalysed reaction is aldehydo-D-galacturonate = keto-D-tagaturonate. Its pathway is carbohydrate metabolism; pentose and glucuronate interconversion. The chain is Uronate isomerase (uxaC) from Corynebacterium glutamicum (strain ATCC 13032 / DSM 20300 / JCM 1318 / BCRC 11384 / CCUG 27702 / LMG 3730 / NBRC 12168 / NCIMB 10025 / NRRL B-2784 / 534).